The following is a 365-amino-acid chain: Aminomethyltransferase (365 aa).

Belongs to the GcvT family. In terms of assembly, the glycine cleavage system is composed of four proteins: P, T, L and H.

The enzyme catalyses N(6)-[(R)-S(8)-aminomethyldihydrolipoyl]-L-lysyl-[protein] + (6S)-5,6,7,8-tetrahydrofolate = N(6)-[(R)-dihydrolipoyl]-L-lysyl-[protein] + (6R)-5,10-methylene-5,6,7,8-tetrahydrofolate + NH4(+). Functionally, the glycine cleavage system catalyzes the degradation of glycine. This Desulfitobacterium hafniense (strain DSM 10664 / DCB-2) protein is Aminomethyltransferase.